Reading from the N-terminus, the 79-residue chain is UPF0180 protein BCB4264_A1446 (79 aa).

The protein belongs to the UPF0180 family.

The sequence is that of UPF0180 protein BCB4264_A1446 from Bacillus cereus (strain B4264).